We begin with the raw amino-acid sequence, 361 residues long: Polyribonucleotide 5'-hydroxyl-kinase PH0197 (361 aa).

43 to 50 (GDVDTGKT) contributes to the ATP binding site.

The cofactor is a divalent metal cation.

The catalysed reaction is a 5'-end dephospho-2'-deoxyribonucleoside-DNA + ATP = a 5'-end 5'-phospho-2'-deoxyribonucleoside-DNA + ADP + H(+). It carries out the reaction a 5'-end dephospho-ribonucleoside-RNA + ATP = a 5'-end 5'-phospho-ribonucleoside-RNA + ADP + H(+). With respect to regulation, DNA kinase activity is inhibited by 250 mM sodium chloride whereas RNA kinase activity is unaffected. Polynucleotide kinase that can phosphorylate the 5'-hydroxyl groups of both single-stranded RNA (ssRNA) and single-stranded DNA (ssDNA). Exhibits a strong preference for ssRNA. The chain is Polyribonucleotide 5'-hydroxyl-kinase PH0197 from Pyrococcus horikoshii (strain ATCC 700860 / DSM 12428 / JCM 9974 / NBRC 100139 / OT-3).